We begin with the raw amino-acid sequence, 1366 residues long: DNA-directed RNA polymerase subunit beta' (1366 aa).

The interval M1–R40 is disordered. Basic residues predominate over residues K7–K24. Over residues Q25–S38 the composition is skewed to polar residues. Positions 250, 317, 324, and 327 each coordinate Zn(2+). The disordered stretch occupies residues T1299–E1366. Low complexity predominate over residues A1353–E1366.

This sequence belongs to the RNA polymerase beta' chain family. RpoC2 subfamily. In cyanobacteria the RNAP catalytic core is composed of 2 alpha, 1 beta, 1 beta', 1 gamma and 1 omega subunit. When a sigma factor is associated with the core the holoenzyme is formed, which can initiate transcription. Requires Zn(2+) as cofactor.

It catalyses the reaction RNA(n) + a ribonucleoside 5'-triphosphate = RNA(n+1) + diphosphate. In terms of biological role, DNA-dependent RNA polymerase catalyzes the transcription of DNA into RNA using the four ribonucleoside triphosphates as substrates. In Prochlorococcus marinus (strain MIT 9211), this protein is DNA-directed RNA polymerase subunit beta'.